Consider the following 315-residue polypeptide: tRNA dimethylallyltransferase (315 aa).

15-22 (GPTACGKS) contacts ATP. 17 to 22 (TACGKS) provides a ligand contact to substrate. 2 interaction with substrate tRNA regions span residues 40 to 43 (DSAL) and 162 to 166 (QRLIR).

Belongs to the IPP transferase family. In terms of assembly, monomer. Requires Mg(2+) as cofactor.

It catalyses the reaction adenosine(37) in tRNA + dimethylallyl diphosphate = N(6)-dimethylallyladenosine(37) in tRNA + diphosphate. In terms of biological role, catalyzes the transfer of a dimethylallyl group onto the adenine at position 37 in tRNAs that read codons beginning with uridine, leading to the formation of N6-(dimethylallyl)adenosine (i(6)A). The sequence is that of tRNA dimethylallyltransferase from Buchnera aphidicola subsp. Acyrthosiphon pisum (strain APS) (Acyrthosiphon pisum symbiotic bacterium).